The sequence spans 313 residues: Ribosomal RNA small subunit methyltransferase H (313 aa).

S-adenosyl-L-methionine is bound by residues 35–37, Asp55, Phe80, Asp102, and Gln109; that span reads GGH.

The protein belongs to the methyltransferase superfamily. RsmH family.

It localises to the cytoplasm. The enzyme catalyses cytidine(1402) in 16S rRNA + S-adenosyl-L-methionine = N(4)-methylcytidine(1402) in 16S rRNA + S-adenosyl-L-homocysteine + H(+). Its function is as follows. Specifically methylates the N4 position of cytidine in position 1402 (C1402) of 16S rRNA. The polypeptide is Ribosomal RNA small subunit methyltransferase H (Shewanella putrefaciens (strain CN-32 / ATCC BAA-453)).